The following is a 130-amino-acid chain: Fluoride-specific ion channel FluC (130 aa).

A run of 4 helical transmembrane segments spans residues 3 to 23, 38 to 58, 67 to 87, and 102 to 122; these read FVFL…YFVG, LGTF…GHLA, FGIF…SYGL, and VSYV…GWFL. Gly-77 and Thr-80 together coordinate Na(+).

Belongs to the fluoride channel Fluc/FEX (TC 1.A.43) family.

The protein localises to the cell inner membrane. The catalysed reaction is fluoride(in) = fluoride(out). Na(+) is not transported, but it plays an essential structural role and its presence is essential for fluoride channel function. Functionally, fluoride-specific ion channel. Important for reducing fluoride concentration in the cell, thus reducing its toxicity. This Helicobacter pylori (strain HPAG1) protein is Fluoride-specific ion channel FluC.